The chain runs to 339 residues: NADH-quinone oxidoreductase subunit H (339 aa).

Transmembrane regions (helical) follow at residues 10–30, 50–70, 82–102, 115–135, 161–181, 187–207, 235–255, 275–295, and 310–330; these read FPLI…ILCV, PNVV…KLLF, ILFI…WAVV, VGVL…IIAG, MGLV…SGII, IPWW…ISVL, MGFA…SAMT, IPGF…FLWI, and LGWK…SSVL.

This sequence belongs to the complex I subunit 1 family. NDH-1 is composed of 14 different subunits. Subunits NuoA, H, J, K, L, M, N constitute the membrane sector of the complex.

It localises to the cell inner membrane. It carries out the reaction a quinone + NADH + 5 H(+)(in) = a quinol + NAD(+) + 4 H(+)(out). NDH-1 shuttles electrons from NADH, via FMN and iron-sulfur (Fe-S) centers, to quinones in the respiratory chain. The immediate electron acceptor for the enzyme in this species is believed to be ubiquinone. Couples the redox reaction to proton translocation (for every two electrons transferred, four hydrogen ions are translocated across the cytoplasmic membrane), and thus conserves the redox energy in a proton gradient. This subunit may bind ubiquinone. In Rickettsia canadensis (strain McKiel), this protein is NADH-quinone oxidoreductase subunit H.